The following is a 29-amino-acid chain: Dermaseptin-H7 (29 aa).

At leucine 29 the chain carries Leucine amide.

It belongs to the frog skin active peptide (FSAP) family. Dermaseptin subfamily. As to expression, expressed by the skin glands.

The protein localises to the secreted. Has antibacterial activity against the Gram-negative bacterium E.coli and the Gram-positive bacterium S.aureus. Has antiprotozoal activity against L.amazonensis. Has antifungal activity. Has no hemolytic activity. The protein is Dermaseptin-H7 of Pithecopus hypochondrialis (Orange-legged leaf frog).